Consider the following 320-residue polypeptide: tRNA(Ile)-lysidine synthase (320 aa).

33-38 serves as a coordination point for ATP; sequence SGGPDS.

Belongs to the tRNA(Ile)-lysidine synthase family.

It is found in the cytoplasm. The catalysed reaction is cytidine(34) in tRNA(Ile2) + L-lysine + ATP = lysidine(34) in tRNA(Ile2) + AMP + diphosphate + H(+). Functionally, ligates lysine onto the cytidine present at position 34 of the AUA codon-specific tRNA(Ile) that contains the anticodon CAU, in an ATP-dependent manner. Cytidine is converted to lysidine, thus changing the amino acid specificity of the tRNA from methionine to isoleucine. The sequence is that of tRNA(Ile)-lysidine synthase from Mycolicibacterium paratuberculosis (strain ATCC BAA-968 / K-10) (Mycobacterium paratuberculosis).